A 476-amino-acid chain; its full sequence is Glycogen synthase (476 aa).

Residue Lys15 participates in ADP-alpha-D-glucose binding.

Belongs to the glycosyltransferase 1 family. Bacterial/plant glycogen synthase subfamily.

It catalyses the reaction [(1-&gt;4)-alpha-D-glucosyl](n) + ADP-alpha-D-glucose = [(1-&gt;4)-alpha-D-glucosyl](n+1) + ADP + H(+). Its pathway is glycan biosynthesis; glycogen biosynthesis. Synthesizes alpha-1,4-glucan chains using ADP-glucose. The sequence is that of Glycogen synthase from Haemophilus influenzae (strain PittGG).